A 186-amino-acid chain; its full sequence is 3-hydroxyanthranilate 3,4-dioxygenase (186 aa).

R44 provides a ligand contact to O2. Residues H48, E54, and H96 each contribute to the Fe cation site. Position 54 (E54) interacts with substrate. Substrate contacts are provided by R100 and E110. A divalent metal cation is bound by residues C125, C130, C164, and C167.

Belongs to the 3-HAO family. Fe(2+) serves as cofactor.

The protein localises to the cytoplasm. The enzyme catalyses 3-hydroxyanthranilate + O2 = (2Z,4Z)-2-amino-3-carboxymuconate 6-semialdehyde. It participates in cofactor biosynthesis; NAD(+) biosynthesis; quinolinate from L-kynurenine: step 3/3. Its function is as follows. Catalyzes the oxidative ring opening of 3-hydroxyanthranilate to 2-amino-3-carboxymuconate semialdehyde, which spontaneously cyclizes to quinolinate. This Chaetomium globosum (strain ATCC 6205 / CBS 148.51 / DSM 1962 / NBRC 6347 / NRRL 1970) (Soil fungus) protein is 3-hydroxyanthranilate 3,4-dioxygenase.